Consider the following 256-residue polypeptide: Deoxyribose-phosphate aldolase (256 aa).

Catalysis depends on D102, which acts as the Proton donor/acceptor. The active-site Schiff-base intermediate with acetaldehyde is the K165. K197 functions as the Proton donor/acceptor in the catalytic mechanism.

It belongs to the DeoC/FbaB aldolase family. DeoC type 2 subfamily.

It localises to the cytoplasm. The catalysed reaction is 2-deoxy-D-ribose 5-phosphate = D-glyceraldehyde 3-phosphate + acetaldehyde. It functions in the pathway carbohydrate degradation; 2-deoxy-D-ribose 1-phosphate degradation; D-glyceraldehyde 3-phosphate and acetaldehyde from 2-deoxy-alpha-D-ribose 1-phosphate: step 2/2. Its function is as follows. Catalyzes a reversible aldol reaction between acetaldehyde and D-glyceraldehyde 3-phosphate to generate 2-deoxy-D-ribose 5-phosphate. The sequence is that of Deoxyribose-phosphate aldolase from Shewanella sp. (strain ANA-3).